A 115-amino-acid chain; its full sequence is NADH-ubiquinone oxidoreductase chain 3 (115 aa).

The next 3 helical transmembrane spans lie at 3 to 23, 55 to 75, and 84 to 104; these read LFVA…VAFW, FFLV…LLPL, and LSAM…GLIY.

The protein belongs to the complex I subunit 3 family. As to quaternary structure, core subunit of respiratory chain NADH dehydrogenase (Complex I) which is composed of 45 different subunits. Interacts with TMEM186. Interacts with TMEM242.

The protein localises to the mitochondrion inner membrane. The enzyme catalyses a ubiquinone + NADH + 5 H(+)(in) = a ubiquinol + NAD(+) + 4 H(+)(out). Functionally, core subunit of the mitochondrial membrane respiratory chain NADH dehydrogenase (Complex I) which catalyzes electron transfer from NADH through the respiratory chain, using ubiquinone as an electron acceptor. Essential for the catalytic activity of complex I. This Sigmodon hispidus (Hispid cotton rat) protein is NADH-ubiquinone oxidoreductase chain 3.